The following is a 408-amino-acid chain: Imidazolonepropionase (408 aa).

The Fe(3+) site is built by His73 and His75. The Zn(2+) site is built by His73 and His75. Residues Arg82, Tyr145, and His178 each contribute to the 4-imidazolone-5-propanoate site. Tyr145 provides a ligand contact to N-formimidoyl-L-glutamate. Residue His243 coordinates Fe(3+). Residue His243 participates in Zn(2+) binding. Gln246 serves as a coordination point for 4-imidazolone-5-propanoate. Asp318 is a binding site for Fe(3+). Asp318 lines the Zn(2+) pocket. N-formimidoyl-L-glutamate-binding residues include Asn320 and Gly322. Ser323 contributes to the 4-imidazolone-5-propanoate binding site.

Belongs to the metallo-dependent hydrolases superfamily. HutI family. It depends on Zn(2+) as a cofactor. Fe(3+) is required as a cofactor.

It localises to the cytoplasm. The enzyme catalyses 4-imidazolone-5-propanoate + H2O = N-formimidoyl-L-glutamate. It functions in the pathway amino-acid degradation; L-histidine degradation into L-glutamate; N-formimidoyl-L-glutamate from L-histidine: step 3/3. Catalyzes the hydrolytic cleavage of the carbon-nitrogen bond in imidazolone-5-propanoate to yield N-formimidoyl-L-glutamate. It is the third step in the universal histidine degradation pathway. This chain is Imidazolonepropionase, found in Shewanella baltica (strain OS185).